Here is a 138-residue protein sequence, read N- to C-terminus: Large ribosomal subunit protein bL19 (138 aa).

The protein belongs to the bacterial ribosomal protein bL19 family.

Functionally, this protein is located at the 30S-50S ribosomal subunit interface and may play a role in the structure and function of the aminoacyl-tRNA binding site. The protein is Large ribosomal subunit protein bL19 of Rickettsia africae (strain ESF-5).